Consider the following 268-residue polypeptide: Myeloid leukemia factor 1 (268 aa).

Residues Ser-8, Ser-32, and Ser-34 each carry the phosphoserine modification. Disordered regions lie at residues 44-66 (ISDGRGRAHNRRGHNDGEDSLTH) and 209-268 (GRHN…SNKK). The segment at 50-125 (RAHNRRGHND…IGDEPPKVFQ (76 aa)) is interaction with COPS3. 2 stretches are compositionally biased toward basic and acidic residues: residues 56–65 (GHNDGEDSLT) and 226–237 (PGSRELKRREKP).

This sequence belongs to the MLF family. As to quaternary structure, interacts with CENPU. Also interacts with NRBP1/MADM, YWHAZ/14-3-3-zeta and HNRPUL2/MANP. NRBP1 recruits a serine kinase which phosphorylates both itself and MLF1. Phosphorylated MLF1 then binds to YWHAZ and is retained in the cytoplasm. Retained in the nucleus by binding to HNRPUL2. Binds to COPS3/CSN3 which is required for suppression of COP1 and activation of p53. In terms of processing, phosphorylation is required for binding to YWHAZ. As to expression, most abundant in testis, ovary, skeletal muscle, heart, kidney and colon. Low expression in spleen, thymus and peripheral blood leukocytes.

It localises to the cytoplasm. The protein localises to the nucleus. The protein resides in the cell projection. Its subcellular location is the cilium. It is found in the cytoskeleton. It localises to the cilium basal body. Functionally, involved in lineage commitment of primary hemopoietic progenitors by restricting erythroid formation and enhancing myeloid formation. Interferes with erythropoietin-induced erythroid terminal differentiation by preventing cells from exiting the cell cycle through suppression of CDKN1B/p27Kip1 levels. Suppresses COP1 activity via CSN3 which activates p53 and induces cell cycle arrest. Binds DNA and affects the expression of a number of genes so may function as a transcription factor in the nucleus. This Homo sapiens (Human) protein is Myeloid leukemia factor 1 (MLF1).